A 264-amino-acid polypeptide reads, in one-letter code: Shikimate dehydrogenase (NADP(+)) (264 aa).

Shikimate contacts are provided by residues 14–16 and T59; that span reads SLS. K63 acts as the Proton acceptor in catalysis. E75 serves as a coordination point for NADP(+). Positions 84 and 99 each coordinate shikimate. NADP(+) contacts are provided by residues 122–126, 144–149, and I205; these read GAGGA and NRTPSK. Y207 contributes to the shikimate binding site. NADP(+) is bound at residue G228.

Belongs to the shikimate dehydrogenase family. As to quaternary structure, homodimer.

The enzyme catalyses shikimate + NADP(+) = 3-dehydroshikimate + NADPH + H(+). The protein operates within metabolic intermediate biosynthesis; chorismate biosynthesis; chorismate from D-erythrose 4-phosphate and phosphoenolpyruvate: step 4/7. Functionally, involved in the biosynthesis of the chorismate, which leads to the biosynthesis of aromatic amino acids. Catalyzes the reversible NADPH linked reduction of 3-dehydroshikimate (DHSA) to yield shikimate (SA). The chain is Shikimate dehydrogenase (NADP(+)) from Pyrococcus abyssi (strain GE5 / Orsay).